The primary structure comprises 862 residues: Cone cGMP-specific 3',5'-cyclic phosphodiesterase subunit alpha' (862 aa).

GAF domains follow at residues 75 to 224 and 256 to 433; these read SMEK…SLVL and DIER…GWSV. Residues Ser-97, Asn-116, 169–172, and Thr-176 contribute to the 3',5'-cyclic GMP site; that span reads DKKT. In terms of domain architecture, PDEase spans 486–819; the sequence is DEKDLIRILK…VEWKTRADEY (334 aa). Residue His-562 is the Proton donor of the active site. A divalent metal cation-binding residues include His-566, His-602, Asp-603, and Asp-723. Basic and acidic residues predominate over residues 830-842; the sequence is KKKEEEAAAKKAE. A disordered region spans residues 830 to 862; sequence KKKEEEAAAKKAENAAGGGGGGEDGKSKTCIVL. Cys-859 bears the Cysteine methyl ester mark. Cys-859 carries the S-geranylgeranyl cysteine lipid modification. Positions 860–862 are cleaved as a propeptide — removed in mature form; the sequence is IVL.

This sequence belongs to the cyclic nucleotide phosphodiesterase family. As to quaternary structure, composed of two alpha' subunits that are associated with 3 smaller proteins of 11, 13, and 15 kDa. Requires a divalent metal cation as cofactor.

The protein resides in the cell membrane. It catalyses the reaction 3',5'-cyclic GMP + H2O = GMP + H(+). Its function is as follows. As cone-specific cGMP phosphodiesterase, it plays an essential role in light detection and cone phototransduction by rapidly decreasing intracellular levels of cGMP. The protein is Cone cGMP-specific 3',5'-cyclic phosphodiesterase subunit alpha' (PDE6C) of Gallus gallus (Chicken).